A 112-amino-acid polypeptide reads, in one-letter code: Conotoxin vil14.5 (112 aa).

The signal sequence occupies residues methionine 1–serine 22. Residues glutamate 23–arginine 85 constitute a propeptide that is removed on maturation. Positions arginine 53 to proline 74 are disordered. Over residues arginine 62–proline 74 the composition is skewed to basic and acidic residues. Intrachain disulfides connect cysteine 91/cysteine 111 and cysteine 95/cysteine 107.

It belongs to the conotoxin R superfamily. As to expression, expressed by the venom duct.

It localises to the secreted. This is Conotoxin vil14.5 from Conus villepinii (Villepin's cone).